Reading from the N-terminus, the 194-residue chain is Phosphoheptose isomerase (194 aa).

The SIS domain maps to 34–188 (LANIFTKGKK…IEGVERIMFP (155 aa)). 49–51 (NGG) is a binding site for substrate. Zn(2+) contacts are provided by His58 and Glu62. Substrate-binding positions include Glu62, 90–91 (ND), 116–118 (STS), Ser121, and Gln168. Positions 168 and 176 each coordinate Zn(2+).

It belongs to the SIS family. GmhA subfamily. It depends on Zn(2+) as a cofactor.

It is found in the cytoplasm. The catalysed reaction is 2 D-sedoheptulose 7-phosphate = D-glycero-alpha-D-manno-heptose 7-phosphate + D-glycero-beta-D-manno-heptose 7-phosphate. The protein operates within carbohydrate biosynthesis; D-glycero-D-manno-heptose 7-phosphate biosynthesis; D-glycero-alpha-D-manno-heptose 7-phosphate and D-glycero-beta-D-manno-heptose 7-phosphate from sedoheptulose 7-phosphate: step 1/1. In terms of biological role, catalyzes the isomerization of sedoheptulose 7-phosphate in D-glycero-D-manno-heptose 7-phosphate. The sequence is that of Phosphoheptose isomerase from Fusobacterium nucleatum subsp. nucleatum (strain ATCC 25586 / DSM 15643 / BCRC 10681 / CIP 101130 / JCM 8532 / KCTC 2640 / LMG 13131 / VPI 4355).